Here is a 504-residue protein sequence, read N- to C-terminus: Bacterial leucyl aminopeptidase (504 aa).

An N-terminal signal peptide occupies residues Met-1–Ala-21. Positions Glu-22 to Val-106 are excised as a propeptide. Positions 203, 223, 258, and 285 each coordinate Zn(2+). Cys-329 and Cys-333 are disulfide-bonded. Residue His-362 coordinates Zn(2+). Positions Leu-406–Phe-504 are cleaved as a propeptide — removed in mature form.

Belongs to the peptidase M28 family. M28E subfamily. The cofactor is Zn(2+).

It is found in the secreted. The enzyme catalyses Release of an N-terminal amino acid, preferentially leucine, but not glutamic or aspartic acids.. This is Bacterial leucyl aminopeptidase from Vibrio proteolyticus (Aeromonas proteolytica).